A 285-amino-acid polypeptide reads, in one-letter code: Dermonecrotic toxin LlSicTox-alphaIII1ii (285 aa).

H12 is a catalytic residue. The Mg(2+) site is built by E32 and D34. The active-site Nucleophile is H47. A disulfide bridge connects residues C51 and C57. D91 serves as a coordination point for Mg(2+).

This sequence belongs to the arthropod phospholipase D family. Class I subfamily. Mg(2+) serves as cofactor. In terms of tissue distribution, expressed by the venom gland.

Its subcellular location is the secreted. The enzyme catalyses an N-(acyl)-sphingosylphosphocholine = an N-(acyl)-sphingosyl-1,3-cyclic phosphate + choline. It catalyses the reaction an N-(acyl)-sphingosylphosphoethanolamine = an N-(acyl)-sphingosyl-1,3-cyclic phosphate + ethanolamine. The catalysed reaction is a 1-acyl-sn-glycero-3-phosphocholine = a 1-acyl-sn-glycero-2,3-cyclic phosphate + choline. It carries out the reaction a 1-acyl-sn-glycero-3-phosphoethanolamine = a 1-acyl-sn-glycero-2,3-cyclic phosphate + ethanolamine. Functionally, dermonecrotic toxins cleave the phosphodiester linkage between the phosphate and headgroup of certain phospholipids (sphingolipid and lysolipid substrates), forming an alcohol (often choline) and a cyclic phosphate. This toxin acts on sphingomyelin (SM) with high activity (56.8 U/mg). It may also act on ceramide phosphoethanolamine (CPE), lysophosphatidylcholine (LPC) and lysophosphatidylethanolamine (LPE), but not on lysophosphatidylserine (LPS), and lysophosphatidylglycerol (LPG). It acts by transphosphatidylation, releasing exclusively cyclic phosphate products as second products. Induces dermonecrosis, hemolysis, increased vascular permeability, edema, inflammatory response, and platelet aggregation. Is lethal to mice. The polypeptide is Dermonecrotic toxin LlSicTox-alphaIII1ii (Loxosceles laeta (South American recluse spider)).